The sequence spans 362 residues: Aminomethyltransferase (362 aa).

Belongs to the GcvT family. The glycine cleavage system is composed of four proteins: P, T, L and H.

The catalysed reaction is N(6)-[(R)-S(8)-aminomethyldihydrolipoyl]-L-lysyl-[protein] + (6S)-5,6,7,8-tetrahydrofolate = N(6)-[(R)-dihydrolipoyl]-L-lysyl-[protein] + (6R)-5,10-methylene-5,6,7,8-tetrahydrofolate + NH4(+). Its function is as follows. The glycine cleavage system catalyzes the degradation of glycine. The polypeptide is Aminomethyltransferase (Chlorobium limicola (strain DSM 245 / NBRC 103803 / 6330)).